Reading from the N-terminus, the 167-residue chain is Urease accessory protein UreE (167 aa).

A disordered region spans residues 135-167 (SGAYGGGHHHSHSHHEGDEFHSKPRLHHFGGSQ). Over residues 157-167 (KPRLHHFGGSQ) the composition is skewed to basic residues.

It belongs to the UreE family.

The protein resides in the cytoplasm. Its function is as follows. Involved in urease metallocenter assembly. Binds nickel. Probably functions as a nickel donor during metallocenter assembly. This chain is Urease accessory protein UreE, found in Nitrosococcus oceani (strain ATCC 19707 / BCRC 17464 / JCM 30415 / NCIMB 11848 / C-107).